Reading from the N-terminus, the 418-residue chain is Probable carboxypeptidase AO090166000075 (418 aa).

The first 18 residues, 1 to 18, serve as a signal peptide directing secretion; that stretch reads MKATDLFHVTALVAGALA. Residue N74 is glycosylated (N-linked (GlcNAc...) asparagine). Position 147 (D147) interacts with Zn(2+). Residue N168 is glycosylated (N-linked (GlcNAc...) asparagine). E179 acts as the Proton acceptor in catalysis. A Zn(2+)-binding site is contributed by E180.

This sequence belongs to the peptidase M20A family. Zn(2+) is required as a cofactor.

It localises to the secreted. The chain is Probable carboxypeptidase AO090166000075 from Aspergillus oryzae (strain ATCC 42149 / RIB 40) (Yellow koji mold).